A 214-amino-acid polypeptide reads, in one-letter code: Putative archaetidylserine decarboxylase proenzyme (214 aa).

S180 acts as the Schiff-base intermediate with substrate; via pyruvic acid in catalysis. S180 is modified (pyruvic acid (Ser); by autocatalysis).

This sequence belongs to the phosphatidylserine decarboxylase family. PSD-A subfamily. Heterodimer of a large membrane-associated beta subunit and a small pyruvoyl-containing alpha subunit. The cofactor is pyruvate. Is synthesized initially as an inactive proenzyme. Formation of the active enzyme involves a self-maturation process in which the active site pyruvoyl group is generated from an internal serine residue via an autocatalytic post-translational modification. Two non-identical subunits are generated from the proenzyme in this reaction, and the pyruvate is formed at the N-terminus of the alpha chain, which is derived from the carboxyl end of the proenzyme. The post-translation cleavage follows an unusual pathway, termed non-hydrolytic serinolysis, in which the side chain hydroxyl group of the serine supplies its oxygen atom to form the C-terminus of the beta chain, while the remainder of the serine residue undergoes an oxidative deamination to produce ammonia and the pyruvoyl prosthetic group on the alpha chain.

Its subcellular location is the cell membrane. It carries out the reaction archaetidylserine + H(+) = archaetidylethanolamine + CO2. In terms of biological role, catalyzes the formation of archaetidylethanolamine (PtdEtn) from archaetidylserine (PtdSer). This Methanopyrus kandleri (strain AV19 / DSM 6324 / JCM 9639 / NBRC 100938) protein is Putative archaetidylserine decarboxylase proenzyme.